The following is a 204-amino-acid chain: Holliday junction branch migration complex subunit RuvA (204 aa).

The tract at residues 1–64 is domain I; sequence MIGRLRGVVI…EDAQLLYGFN (64 aa). The interval 65-143 is domain II; the sequence is HKQERALFRE…GWVSHDLFSP (79 aa). A flexible linker region spans residues 144-155; it reads AEISLPARESVL. A domain III region spans residues 156–204; sequence RAPDSSEEAASALVALGYKPQQASQIVSKIAKEGMSVEDIIRESLRSLV.

It belongs to the RuvA family. In terms of assembly, homotetramer. Forms an RuvA(8)-RuvB(12)-Holliday junction (HJ) complex. HJ DNA is sandwiched between 2 RuvA tetramers; dsDNA enters through RuvA and exits via RuvB. An RuvB hexamer assembles on each DNA strand where it exits the tetramer. Each RuvB hexamer is contacted by two RuvA subunits (via domain III) on 2 adjacent RuvB subunits; this complex drives branch migration. In the full resolvosome a probable DNA-RuvA(4)-RuvB(12)-RuvC(2) complex forms which resolves the HJ.

The protein resides in the cytoplasm. The RuvA-RuvB-RuvC complex processes Holliday junction (HJ) DNA during genetic recombination and DNA repair, while the RuvA-RuvB complex plays an important role in the rescue of blocked DNA replication forks via replication fork reversal (RFR). RuvA specifically binds to HJ cruciform DNA, conferring on it an open structure. The RuvB hexamer acts as an ATP-dependent pump, pulling dsDNA into and through the RuvAB complex. HJ branch migration allows RuvC to scan DNA until it finds its consensus sequence, where it cleaves and resolves the cruciform DNA. The protein is Holliday junction branch migration complex subunit RuvA of Aeromonas salmonicida (strain A449).